The chain runs to 189 residues: MTATPANVTLKDLNDQWAMNWKLCDDSEPMLVAQGVPWLVRKLLGLISMQVALKTVPDPATGLTHFFAEYKPPFGLPSSGEERVLDFVAEEITVPVFGTLRVSTRWATPKELDEIDAYLGEGFEKGTKEVIHMKTENSELGVVTHQTFGFEKIKGVRYHTRHIVVKRGGESTRLTLVYDYVGPQHAKKS.

Belongs to the pericyclase pydY family.

It participates in mycotoxin biosynthesis. Functionally, probable pericyclase; part of the gene scp cluster that mediates the biosynthesis of a hirsutellone-like compound that has still to be identified. This chain is Probable pericyclase scpY, found in Mollisia scopiformis (Conifer needle endophyte fungus).